The sequence spans 1049 residues: FERM, ARHGEF and pleckstrin domain-containing protein 1 (1049 aa).

The tract at residues 1–37 is disordered; the sequence is MGEIEQKPTPASRLGAPENSGISTLERGQKPPPTPSG. Ser-20 and Ser-23 each carry phosphoserine. The residue at position 24 (Thr-24) is a Phosphothreonine. In terms of domain architecture, FERM spans 40-320; that stretch reads MTVKIQMLDD…EHHAFFRLFE (281 aa). Phosphoserine occurs at positions 340, 373, 389, 403, 427, 433, and 437. Positions 361 to 537 are disordered; sequence FERKHSKIHS…TDDEEEGRRK (177 aa). Polar residues-rich tracts occupy residues 371 to 395 and 402 to 412; these read TRSL…SASL and ESPSAQSCQQA. Residues 435–448 are compositionally biased toward low complexity; it reads SGSKAADGTAAAAP. Composition is skewed to polar residues over residues 473–492 and 499–514; these read STGS…NSQG and VTLS…QASP. Residues Ser-513 and Ser-517 each carry the phosphoserine modification. Residues 543–734 enclose the DH domain; the sequence is KAYYIAKEVS…TEMVAQLHGT (192 aa). Positions 763-860 constitute a PH 1 domain; the sequence is EFIRLGSLSK…WLEDIQMAID (98 aa). A phosphoserine mark is found at Ser-837, Ser-876, and Ser-882. Residues 866–908 are disordered; it reads NGPTPELLASSPPDNKSPDEATAADQESEDDLSASRTSLERQA. Thr-887 carries the phosphothreonine modification. Phosphoserine occurs at positions 893, 900, and 903. In terms of domain architecture, PH 2 spans 936 to 1033; sequence ENQLSGNLLR…WMEVIRSATS (98 aa).

In terms of assembly, interacts with CADM1. Interacts with RAC1. Detected in forbrain (at protein level).

It localises to the cell membrane. The protein resides in the synapse. The protein localises to the synaptosome. Its subcellular location is the cytoplasm. It is found in the cytosol. It localises to the cell projection. The protein resides in the filopodium. The protein localises to the dendrite. Its subcellular location is the dendritic spine. May play a role in semaphorin signaling. Functions as a guanine nucleotide exchange factor for RAC1. Plays a role in the assembly and disassembly of dendritic filopodia, the formation of dendritic spines, regulation of dendrite length and ultimately the formation of synapses. In Rattus norvegicus (Rat), this protein is FERM, ARHGEF and pleckstrin domain-containing protein 1 (Farp1).